The primary structure comprises 584 residues: Putative sel1-like repeat-containing protein L18 (584 aa).

6 Sel1-like repeats span residues 132–167 (SMAQ…DQNN), 168–203 (KYGL…CQNF), 204–237 (SKAQ…NQNH), 238–273 (SSAQ…SQGL), 274–309 (NSAK…YDDG), and 316–351 (EVAM…NTKN).

This Acanthamoeba polyphaga (Amoeba) protein is Putative sel1-like repeat-containing protein L18.